The primary structure comprises 166 residues: Antibacterial peptide PMAP-36 (166 aa).

An N-terminal signal peptide occupies residues 1-29; that stretch reads METQRASLCLGRWSLWLLLLGLVVPSASA. Positions 30–129 are excised as a propeptide; that stretch reads QALSYREAVL…LDINCDEIQS (100 aa). 2 disulfides stabilise this stretch: Cys85–Cys96 and Cys107–Cys124.

Belongs to the cathelicidin family.

Its subcellular location is the secreted. Functionally, exerts antimicrobial activity against both Gram-positive and negative bacteria. Its activity appears to be mediated by its ability to damage bacterial membranes. In Sus scrofa (Pig), this protein is Antibacterial peptide PMAP-36 (PMAP36).